Here is a 358-residue protein sequence, read N- to C-terminus: Biotin synthase (358 aa).

Positions 55–278 (NKVRIHILDN…VNPDSEIRIA (224 aa)) constitute a Radical SAM core domain. Positions 70, 74, and 77 each coordinate [4Fe-4S] cluster. [2Fe-2S] cluster contacts are provided by Cys114, Cys146, Cys206, and Arg276.

Belongs to the radical SAM superfamily. Biotin synthase family. Homodimer. Requires [4Fe-4S] cluster as cofactor. The cofactor is [2Fe-2S] cluster.

The enzyme catalyses (4R,5S)-dethiobiotin + (sulfur carrier)-SH + 2 reduced [2Fe-2S]-[ferredoxin] + 2 S-adenosyl-L-methionine = (sulfur carrier)-H + biotin + 2 5'-deoxyadenosine + 2 L-methionine + 2 oxidized [2Fe-2S]-[ferredoxin]. Its pathway is cofactor biosynthesis; biotin biosynthesis; biotin from 7,8-diaminononanoate: step 2/2. Functionally, catalyzes the conversion of dethiobiotin (DTB) to biotin by the insertion of a sulfur atom into dethiobiotin via a radical-based mechanism. The chain is Biotin synthase from Leptospira borgpetersenii serovar Hardjo-bovis (strain JB197).